A 510-amino-acid chain; its full sequence is Histidine ammonia-lyase (510 aa).

The segment at residues 143-145 is a cross-link (5-imidazolinone (Ala-Gly)); it reads ASG. A 2,3-didehydroalanine (Ser) modification is found at serine 144.

The protein belongs to the PAL/histidase family. Post-translationally, contains an active site 4-methylidene-imidazol-5-one (MIO), which is formed autocatalytically by cyclization and dehydration of residues Ala-Ser-Gly.

It localises to the cytoplasm. It carries out the reaction L-histidine = trans-urocanate + NH4(+). It participates in amino-acid degradation; L-histidine degradation into L-glutamate; N-formimidoyl-L-glutamate from L-histidine: step 1/3. This Photobacterium profundum (strain SS9) protein is Histidine ammonia-lyase.